The primary structure comprises 446 residues: Thymidine phosphorylase (446 aa).

The protein belongs to the thymidine/pyrimidine-nucleoside phosphorylase family. As to quaternary structure, homodimer.

The enzyme catalyses thymidine + phosphate = 2-deoxy-alpha-D-ribose 1-phosphate + thymine. It participates in pyrimidine metabolism; dTMP biosynthesis via salvage pathway; dTMP from thymine: step 1/2. Functionally, the enzymes which catalyze the reversible phosphorolysis of pyrimidine nucleosides are involved in the degradation of these compounds and in their utilization as carbon and energy sources, or in the rescue of pyrimidine bases for nucleotide synthesis. This chain is Thymidine phosphorylase, found in Idiomarina loihiensis (strain ATCC BAA-735 / DSM 15497 / L2-TR).